The primary structure comprises 1213 residues: A disintegrin and metalloproteinase with thrombospondin motifs 2 (1213 aa).

The N-terminal stretch at 1-28 is a signal peptide; sequence MDPPAGAARRLLCPALLLLLLPPPPLLL. Residues 29-260 constitute a propeptide that is removed on maturation; the sequence is LPPPPASVRL…INSSRRRVRR (232 aa). Residue asparagine 111 is glycosylated (N-linked (GlcNAc...) asparagine). The disordered stretch occupies residues 211-232; sequence YRRPPTPKPPPVSEPQALDTGV. A compositionally biased stretch (pro residues) spans 214–223; it reads PPTPKPPPVS. N-linked (GlcNAc...) asparagine glycosylation occurs at asparagine 252. Residues 267–471 enclose the Peptidase M12B domain; sequence YNIEVLLGVD…HSYDCLRDDP (205 aa). Disulfide bonds link cysteine 344–cysteine 393, cysteine 387–cysteine 466, cysteine 426–cysteine 452, cysteine 493–cysteine 518, cysteine 504–cysteine 527, cysteine 513–cysteine 546, cysteine 540–cysteine 551, cysteine 574–cysteine 611, cysteine 578–cysteine 616, and cysteine 589–cysteine 601. Histidine 409 serves as a coordination point for Zn(2+). Glutamate 410 is an active-site residue. Zn(2+)-binding residues include histidine 413 and histidine 419. One can recognise a Disintegrin domain in the interval 480–560; the sequence is PQLPGLHYSM…CIWLTPDILK (81 aa). In terms of domain architecture, TSP type-1 1 spans 561 to 617; the sequence is RDGNWGAWTPFGSCSRTCGTGVKFRTRQCDNPHPANGGRTCSGLAYDFQLCNPQDCP. Positions 692 to 694 match the Cell attachment site motif; sequence RGD. The interval 723–851 is spacer; that stretch reads CKVVKGTFTR…LNVDDNNVLE (129 aa). 3 consecutive TSP type-1 domains span residues 855-913, 915-975, and 976-1030; these read VRHE…NPQE, SQPV…NREL, and CPGR…APCP. N-linked (GlcNAc...) asparagine glycans are attached at residues asparagine 949, asparagine 950, and asparagine 994. 3 cysteine pairs are disulfide-bonded: cysteine 988–cysteine 1024, cysteine 992–cysteine 1029, and cysteine 1003–cysteine 1013. Asparagine 1032 carries N-linked (GlcNAc...) asparagine glycosylation. Positions 1060-1098 constitute a PLAC domain; the sequence is SKDQCQGDKSMFCRMEVLSRYCSIPSYNKLCCKSCNPPR. Residues asparagine 1099, asparagine 1147, and asparagine 1152 are each glycosylated (N-linked (GlcNAc...) asparagine).

May belong to a multimeric complex. Binds specifically to collagen type XIV. It depends on Zn(2+) as a cofactor. Post-translationally, the precursor is cleaved by a furin endopeptidase. Glycosylated. Can be O-fucosylated by POFUT2 on a serine or a threonine residue found within the consensus sequence C1-X(2)-(S/T)-C2-G of the TSP type-1 repeat domains where C1 and C2 are the first and second cysteine residue of the repeat, respectively. Fucosylated repeats can then be further glycosylated by the addition of a beta-1,3-glucose residue by the glucosyltransferase, B3GALTL. Fucosylation mediates the efficient secretion of ADAMTS family members. Can also be C-glycosylated with one or two mannose molecules on tryptophan residues within the consensus sequence W-X-X-W of the TPRs, and N-glycosylated. These other glycosylations can also facilitate secretion.

The protein resides in the secreted. It localises to the extracellular space. Its subcellular location is the extracellular matrix. The catalysed reaction is Cleaves the N-propeptide of collagen chain alpha1(I) at Pro-|-Gln and of alpha1(II) and alpha2(I) at Ala-|-Gln.. Functionally, cleaves the propeptides of type I and II collagen prior to fibril assembly. Does not act on type III collagen. Cleaves lysyl oxidase LOX at a site downstream of its propeptide cleavage site to produce a short LOX form with reduced collagen-binding activity. The chain is A disintegrin and metalloproteinase with thrombospondin motifs 2 (Adamts2) from Mus musculus (Mouse).